The chain runs to 93 residues: Acylphosphatase (93 aa).

An intrachain disulfide couples cysteine 5 to cysteine 49. The Acylphosphatase-like domain maps to 5–93; the sequence is CIIAWVYGRV…ETLTGFSIRY (89 aa). Residues arginine 20 and asparagine 38 contribute to the active site.

Belongs to the acylphosphatase family.

The enzyme catalyses an acyl phosphate + H2O = a carboxylate + phosphate + H(+). The chain is Acylphosphatase from Salmonella typhi.